Consider the following 466-residue polypeptide: Coagulation factor VII (466 aa).

A signal peptide spans 1–20; the sequence is MVSQALRLLCLLLGLQGCLA. The propeptide occupies 21–60; the sequence is AGGVAKASGGETRDMPWKPGPHRVFVTQEEAHGVLHRRRR. The Gla domain occupies 61–105; the sequence is ANAFLEELRPGSLERECKEEQCSFEEAREIFKDAERTKLFWISYS. 4-carboxyglutamate occurs at positions 66, 67, 74, 76, 79, 80, 85, 86, 89, and 95. C77 and C82 are joined by a disulfide. Positions 106–142 constitute an EGF-like 1; calcium-binding domain; that stretch reads DGDQCASSPCQNGGSCKDQLQSYICFCLPAFEGRNCE. 10 cysteine pairs are disulfide-bonded: C110–C121, C115–C130, C132–C141, C151–C162, C158–C172, C174–C187, C195–C322, C219–C224, C238–C254, and C370–C389. O-linked (Glc...) serine; alternate glycosylation is present at S112. O-linked (Xyl...) serine; alternate glycosylation occurs at S112. O-linked (Fuc) serine glycosylation occurs at S120. Residue D123 is modified to (3R)-3-hydroxyaspartate. Residues 147–188 form the EGF-like 2 domain; it reads DQLICVNENGGCEQYCSDHTGTKRSCRCHEGYSLLADGVSCT. N-linked (GlcNAc...) asparagine glycosylation is present at N205. In terms of domain architecture, Peptidase S1 spans 213–452; that stretch reads IVGGKVCPKG…YIEWLQKLMR (240 aa). Catalysis depends on charge relay system residues H253 and D302. N382 is a glycosylation site (N-linked (GlcNAc...) asparagine). D398 contacts substrate. A disulfide bridge links C400 with C428. S404 serves as the catalytic Charge relay system.

Belongs to the peptidase S1 family. As to quaternary structure, heterodimer of a light chain and a heavy chain linked by a disulfide bond. Interacts (activated) with iripin-8, a serine protease inhibitor from Ixodes ricinus saliva. The vitamin K-dependent, enzymatic carboxylation of some glutamate residues allows the modified protein to bind calcium. Post-translationally, the iron and 2-oxoglutarate dependent 3-hydroxylation of aspartate and asparagine is (R) stereospecific within EGF domains. In terms of processing, O- and N-glycosylated. N-glycosylation at Asn-205 occurs cotranslationally and is mediated by STT3A-containing complexes, while glycosylation at Asn-382 is post-translational and is mediated STT3B-containing complexes before folding. O-fucosylated by POFUT1 on a conserved serine or threonine residue found in the consensus sequence C2-X(4,5)-[S/T]-C3 of EGF domains, where C2 and C3 are the second and third conserved cysteines. Can be either O-glucosylated or O-xylosylated at Ser-112 by POGLUT1 in vitro. As to expression, plasma.

The protein resides in the secreted. The enzyme catalyses Selective cleavage of Arg-|-Ile bond in factor X to form factor Xa.. Its function is as follows. Initiates the extrinsic pathway of blood coagulation. Serine protease that circulates in the blood in a zymogen form. Factor VII is converted to factor VIIa by factor Xa, factor XIIa, factor IXa, or thrombin by minor proteolysis. In the presence of tissue factor and calcium ions, factor VIIa then converts factor X to factor Xa by limited proteolysis. Factor VIIa also converts factor IX to factor IXa in the presence of tissue factor and calcium. This is Coagulation factor VII (F7) from Homo sapiens (Human).